We begin with the raw amino-acid sequence, 447 residues long: MTIYHFVGIKGSGMSALAQILHDKGFQVQGSDVDKYFFTQKALEEKQIPIMTFSADNINEGLTIIAGNAFPDTHEEIERALELGLPVIRYHKFLGQLIDGYTSIAITGSHGKTSTTGLLSHVVGAIRPTSYLIGDGTGSGTKNAQYFALEACEYQRHFLAYKPTYAIMTNIDWDHPDYFKSVDDVFNAFETLGKQVKKAVFALGDDEELRKLSLDIPIIYFGFDEENEFQAKNVIKETTGTRFDVYHRDEFLASFEIPAYGDHNVLNALSVIALCDYEGLPVEAVKKELKTFEGVKRRFSITEKGNQVLVDDYAHHPSEIRATVNAARQKYPDKKVVAVFQPHTFTRTRTFLQGFADSLNLADEVYLCDIFGSAREKTGNLTIADLAHKTKGNHIIKEEHTEELLKYPGAVILFMGAGDVQKFQAAYEKVLDNEVVTKSDFKKSAIN.

108-114 is a binding site for ATP; it reads GSHGKTS.

The protein belongs to the MurCDEF family.

It localises to the cytoplasm. It catalyses the reaction UDP-N-acetyl-alpha-D-muramate + L-alanine + ATP = UDP-N-acetyl-alpha-D-muramoyl-L-alanine + ADP + phosphate + H(+). Its pathway is cell wall biogenesis; peptidoglycan biosynthesis. Cell wall formation. The chain is UDP-N-acetylmuramate--L-alanine ligase from Listeria welshimeri serovar 6b (strain ATCC 35897 / DSM 20650 / CCUG 15529 / CIP 8149 / NCTC 11857 / SLCC 5334 / V8).